The following is a 206-amino-acid chain: Ras-related protein Rab-18 (206 aa).

Met1 carries the N-acetylmethionine modification. GTP-binding residues include Ser17, Gly20, Lys21, Ser22, Ser23, Asp34, Pro35, Thr40, Gly66, Lys123, and Asp125. Ser22 is a binding site for Mg(2+). 2 short sequence motifs (switch) span residues 31-45 (DTFD…GVDF) and 63-80 (DTAG…YYRG). Mg(2+) is bound at residue Thr40. Ser144 is subject to Phosphoserine. Ala152 lines the GTP pocket. The S-palmitoyl cysteine moiety is linked to residue Cys199. Cys203 bears the Cysteine methyl ester mark. A lipid anchor (S-geranylgeranyl cysteine) is attached at Cys203. Residues 204-206 (SVL) constitute a propeptide, removed in mature form.

The protein belongs to the small GTPase superfamily. Rab family. As to quaternary structure, interacts (in GTP-bound form) with ZFYVE1. Interacts with ZW10 and this interaction is enhanced in the presence of ZFYVE1. Interacts with BSCL2. It depends on Mg(2+) as a cofactor. Expression is high in the brain, moderate in the pituitary, and low in the liver. Detected in all tissues. Highly enriched on apical endocytic structures in polarized epithelial cells of kidney proximal tubules. Detected on both the apical and basolateral domains in epithelial cells of the intestine.

It localises to the endoplasmic reticulum membrane. It is found in the golgi apparatus. The protein resides in the cis-Golgi network membrane. Its subcellular location is the lipid droplet. The protein localises to the apical cell membrane. The enzyme catalyses GTP + H2O = GDP + phosphate + H(+). Regulated by guanine nucleotide exchange factor (GEF) RAB3GAP1-RAB3GAP2 complex at the cis-Golgi membrane which promotes the exchange of bound GDP for free GTP. Regulated by GTPase activating protein (GAP) TBC1D20 at the ER membrane which increases the GTP hydrolysis activity. Inhibited by GDP dissociation inhibitors (GDIs) which prevent Rab-GDP dissociation. The small GTPases Rab are key regulators of intracellular membrane trafficking, from the formation of transport vesicles to their fusion with membranes. Rabs cycle between an inactive GDP-bound form and an active GTP-bound form that is able to recruit to membranes different sets of downstream effectors directly responsible for vesicle formation, movement, tethering and fusion. RAB18 is required for the localization of ZFYVE1 to lipid droplets and for its function in mediating the formation of endoplasmic reticulum-lipid droplets (ER-LD) contacts. Also required for maintaining endoplasmic reticulum structure. Plays a role in apical endocytosis/recycling. Plays a key role in eye and brain development and neurodegeneration. In Mus musculus (Mouse), this protein is Ras-related protein Rab-18.